A 422-amino-acid polypeptide reads, in one-letter code: Elongation factor 1-gamma (422 aa).

Residues 1–82 (MALVLHAGKT…YVARLKADNP (82 aa)) form the GST N-terminal domain. Positions 87 to 215 (SLIDYAHIEQ…VKQTESVPPV (129 aa)) constitute a GST C-terminal domain. The segment at 210 to 269 (ESVPPVPSAKKPSQPKETKSKAKEEPKKEAKKEPAKPKAEAAEEVEEAPKPKPKNPLDLL) is disordered. Residues 223 to 250 (QPKETKSKAKEEPKKEAKKEPAKPKAEA) show a composition bias toward basic and acidic residues. Residues 262–422 (PKNPLDLLPP…EALLDAKCFK (161 aa)) form the EF-1-gamma C-terminal domain.

As to quaternary structure, EF-1 is composed of four subunits: alpha, beta, delta, and gamma.

Functionally, probably plays a role in anchoring the complex to other cellular components. The polypeptide is Elongation factor 1-gamma (Prunus avium (Cherry)).